Reading from the N-terminus, the 194-residue chain is dITP/XTP pyrophosphatase (194 aa).

8-13 (TGNPGK) serves as a coordination point for substrate. Mg(2+) is bound by residues glutamate 38 and aspartate 67. Residue aspartate 67 is the Proton acceptor of the active site. Substrate-binding positions include serine 68, 146–149 (FGYD), lysine 169, and 174–175 (HR).

This sequence belongs to the HAM1 NTPase family. In terms of assembly, homodimer. Mg(2+) serves as cofactor.

It carries out the reaction XTP + H2O = XMP + diphosphate + H(+). The catalysed reaction is dITP + H2O = dIMP + diphosphate + H(+). It catalyses the reaction ITP + H2O = IMP + diphosphate + H(+). Its function is as follows. Pyrophosphatase that catalyzes the hydrolysis of nucleoside triphosphates to their monophosphate derivatives, with a high preference for the non-canonical purine nucleotides XTP (xanthosine triphosphate), dITP (deoxyinosine triphosphate) and ITP. Seems to function as a house-cleaning enzyme that removes non-canonical purine nucleotides from the nucleotide pool, thus preventing their incorporation into DNA/RNA and avoiding chromosomal lesions. The polypeptide is dITP/XTP pyrophosphatase (Synechocystis sp. (strain ATCC 27184 / PCC 6803 / Kazusa)).